Reading from the N-terminus, the 345-residue chain is Acyl-CoA--sterol O-acyltransferase 1 (345 aa).

The next 9 helical transmembrane spans lie at 1 to 21, 32 to 52, 54 to 74, 86 to 106, 120 to 140, 148 to 168, 231 to 251, 258 to 278, and 291 to 311; these read MASF…TFFI, LILF…IYSL, LLGI…LLFA, PLSL…QLSP, GPLI…AYEY, VVLT…LAAT, ILAA…IFFY, DWKM…EIAI, and AISQ…LFLP.

It belongs to the wax synthase family.

The protein localises to the membrane. Involved in the esterification of cycloartenol. Not implicated in the formation of sterol esters in flowers or during seed maturation. Has a substrate preference toward saturated fatty acyl donors (16:0 &gt; 18:0 &gt; 16:1 &gt; 18:1). Does not require triacyglycerols (TAGs) as a fatty acyl donor, and is unable to acylate diacylglycerol to produce TAG. The sequence is that of Acyl-CoA--sterol O-acyltransferase 1 (ASAT1) from Arabidopsis thaliana (Mouse-ear cress).